Consider the following 290-residue polypeptide: Nucleotide-binding protein XfasM23_0667 (290 aa).

13 to 20 provides a ligand contact to ATP; the sequence is GLSGSGKS. GTP is bound at residue 65–68; sequence DIRS.

The protein belongs to the RapZ-like family.

Its function is as follows. Displays ATPase and GTPase activities. This Xylella fastidiosa (strain M23) protein is Nucleotide-binding protein XfasM23_0667.